Reading from the N-terminus, the 188-residue chain is Probable nicotinate-nucleotide adenylyltransferase (188 aa).

It belongs to the NadD family.

The catalysed reaction is nicotinate beta-D-ribonucleotide + ATP + H(+) = deamido-NAD(+) + diphosphate. The protein operates within cofactor biosynthesis; NAD(+) biosynthesis; deamido-NAD(+) from nicotinate D-ribonucleotide: step 1/1. Catalyzes the reversible adenylation of nicotinate mononucleotide (NaMN) to nicotinic acid adenine dinucleotide (NaAD). The chain is Probable nicotinate-nucleotide adenylyltransferase from Sulfurovum sp. (strain NBC37-1).